The chain runs to 61 residues: Ubiquinol-cytochrome c reductase complex assembly factor 6 (61 aa).

The Mitochondrial matrix portion of the chain corresponds to Met1 to Gln9. A helical transmembrane segment spans residues Tyr10–Tyr32. At Lys33 to Ala61 the chain is on the mitochondrial intermembrane side.

It belongs to the UQCC6 family. Interacts with sloth1; the interaction stabilizes both components. Expressed in the brain.

It is found in the mitochondrion inner membrane. It localises to the mitochondrion. Its function is as follows. Required for the assembly and stability of the mitochondrial ubiquinol-cytochrome c reductase complex (complex III (CIII) or cytochrome b-c1 complex), a multisubunit transmembrane complex that is part of the mitochondrial electron transport chain (ETC) which drives oxidative phosphorylation. This chain is Ubiquinol-cytochrome c reductase complex assembly factor 6, found in Drosophila melanogaster (Fruit fly).